A 342-amino-acid chain; its full sequence is Anthranilate phosphoribosyltransferase (342 aa).

Residues G84, 87 to 88, T92, 94 to 97, 112 to 120, and S124 contribute to the 5-phospho-alpha-D-ribose 1-diphosphate site; these read GD, NIST, and KHGNRGVSS. Anthranilate is bound at residue G84. S96 contributes to the Mg(2+) binding site. Position 115 (N115) interacts with anthranilate. Anthranilate is bound at residue R170. D229 and E230 together coordinate Mg(2+).

The protein belongs to the anthranilate phosphoribosyltransferase family. Homodimer. Mg(2+) serves as cofactor.

It carries out the reaction N-(5-phospho-beta-D-ribosyl)anthranilate + diphosphate = 5-phospho-alpha-D-ribose 1-diphosphate + anthranilate. The protein operates within amino-acid biosynthesis; L-tryptophan biosynthesis; L-tryptophan from chorismate: step 2/5. Catalyzes the transfer of the phosphoribosyl group of 5-phosphorylribose-1-pyrophosphate (PRPP) to anthranilate to yield N-(5'-phosphoribosyl)-anthranilate (PRA). This chain is Anthranilate phosphoribosyltransferase, found in Cupriavidus metallidurans (strain ATCC 43123 / DSM 2839 / NBRC 102507 / CH34) (Ralstonia metallidurans).